We begin with the raw amino-acid sequence, 129 residues long: UPF0225 protein XC_4246 (129 aa).

It belongs to the UPF0225 family.

This is UPF0225 protein XC_4246 from Xanthomonas campestris pv. campestris (strain 8004).